The sequence spans 411 residues: Intracellular hyaluronan-binding protein 4 (411 aa).

Phosphoserine occurs at positions 7 and 36. Residues 42-62 are a coiled coil; the sequence is LREAEHRRQQQLQRKRRDEAA. Residues 42 to 271 are disordered; it reads LREAEHRRQQ…ECQGTLDEES (230 aa). R70 is modified (omega-N-methylarginine). At S74 the chain carries Phosphoserine. Basic and acidic residues predominate over residues 87–97; it reads GRRESQKERKS. S108 carries the post-translational modification Phosphoserine. Composition is skewed to basic and acidic residues over residues 138–181 and 205–229; these read VLER…DRPL and DSFD…RMED. Glycyl lysine isopeptide (Lys-Gly) (interchain with G-Cter in SUMO1); alternate cross-links involve residues K212 and K274. Glycyl lysine isopeptide (Lys-Gly) (interchain with G-Cter in SUMO2); alternate cross-links involve residues K212 and K274. Residues 279–301 are a coiled coil; it reads EVEEENQVQEMTLDEWKNLQEQT. Residues 296-313 are compositionally biased toward basic and acidic residues; the sequence is NLQEQTRPKPEFNIRKPE. Residues 296–318 form a disordered region; that stretch reads NLQEQTRPKPEFNIRKPESTVPS. K334 participates in a covalent cross-link: Glycyl lysine isopeptide (Lys-Gly) (interchain with G-Cter in SUMO1); alternate. A Glycyl lysine isopeptide (Lys-Gly) (interchain with G-Cter in SUMO2); alternate cross-link involves residue K334. Phosphothreonine; by PKC occurs at positions 352 and 373. Positions 358 to 411 are disordered; it reads NFGNLPRPGRGARGSTRGGRGRMRRTENYGPRAEVVTQDVAPNPDDPEDFPALA. The span at 402-411 shows a compositional bias: acidic residues; sequence DDPEDFPALA.

It belongs to the SERBP1-HABP4 family. As to quaternary structure, associates with ribosomes; promoting ribosome stabilization. Interacts with EEF2/eEF2; promoting ribosome stabilization. Interacts with FMR1. Interacts with FXR1 and FXR2. Interacts with CHD3 (via C-terminus). Interacts (via C-terminus) with RACK1. Interacts with p53/TP53. Interacts (via N-terminus) with SRSF9; this interaction is direct. Interacts with SYNCRIP; this interaction is direct. Interacts with MEF2C (via N-terminus); this interaction decreases DNA-binding activity of MEF2C in myocardial cells in response to mechanical stress. Interacts with PRMT1 (via N-terminus). Interacts with SPIN1. Post-translationally, phosphorylated by phorbol 12-myristate 13-acetate (PMA)-activated PKC isoforms at Thr-352 and Thr-373. Methylated. Methylation is decreased by phorbol 12-myristate 13-acetate (PMA)-activated PKC, in vitro. As to expression, expressed in adult heart, brain, liver, kidney, testis, and in various embryonic tissues, but not in adult spleen, lung or skeletal muscle.

It is found in the nucleus. Its subcellular location is the cytoplasm. It localises to the stress granule. The protein localises to the sarcoplasm. The protein resides in the nuclear body. It is found in the nucleolus. Its subcellular location is the nucleus speckle. It localises to the cajal body. The protein localises to the gem. Its function is as follows. Ribosome-binding protein that promotes ribosome hibernation, a process during which ribosomes are stabilized in an inactive state and preserved from proteasomal degradation. Acts via its association with EEF2/eEF2 factor at the A-site of the ribosome, promoting ribosome stabilization in an inactive state compatible with storage. Plays a key role in ribosome hibernation in the mature oocyte by promoting ribosome stabilization. Ribosomes, which are produced in large quantities during oogenesis, are stored and translationally repressed in the oocyte and early embryo. Also binds RNA, regulating transcription and pre-mRNA splicing. Binds (via C-terminus) to poly(U) RNA. Seems to play a role in PML-nuclear bodies formation. Negatively regulates DNA-binding activity of the transcription factor MEF2C in myocardial cells in response to mechanical stress. The protein is Intracellular hyaluronan-binding protein 4 of Mus musculus (Mouse).